Consider the following 360-residue polypeptide: Phospho-N-acetylmuramoyl-pentapeptide-transferase (360 aa).

10 helical membrane-spanning segments follow: residues 26–46 (AVLSLLTALLLSLWIGPKMIL), 73–93 (TMGGIMILATITASSLLWGDL), 94–114 (SNPYIWCSLFVLLGYGAIGFV), 132–152 (WKYFWLSVVAFIAVFTMYMIG), 168–188 (IMPQLGLFYIVLAYFVIVGTS), 199–219 (GLAIMPTVFVAGAFAIIAWAT), 239–259 (LVIFCTAIVGAGLGFLWFNTY), 263–283 (VFMGDVGSLALGGALGVIAVL), 288–308 (FLLVIMGGVFVMETVSVILQV), and 338–358 (VIIRFWIISLMLVLLGLVTLK).

The protein belongs to the glycosyltransferase 4 family. MraY subfamily. The cofactor is Mg(2+).

The protein localises to the cell inner membrane. The catalysed reaction is UDP-N-acetyl-alpha-D-muramoyl-L-alanyl-gamma-D-glutamyl-meso-2,6-diaminopimeloyl-D-alanyl-D-alanine + di-trans,octa-cis-undecaprenyl phosphate = di-trans,octa-cis-undecaprenyl diphospho-N-acetyl-alpha-D-muramoyl-L-alanyl-D-glutamyl-meso-2,6-diaminopimeloyl-D-alanyl-D-alanine + UMP. Its pathway is cell wall biogenesis; peptidoglycan biosynthesis. Functionally, catalyzes the initial step of the lipid cycle reactions in the biosynthesis of the cell wall peptidoglycan: transfers peptidoglycan precursor phospho-MurNAc-pentapeptide from UDP-MurNAc-pentapeptide onto the lipid carrier undecaprenyl phosphate, yielding undecaprenyl-pyrophosphoryl-MurNAc-pentapeptide, known as lipid I. The protein is Phospho-N-acetylmuramoyl-pentapeptide-transferase of Actinobacillus succinogenes (strain ATCC 55618 / DSM 22257 / CCUG 43843 / 130Z).